Here is a 1390-residue protein sequence, read N- to C-terminus: DNA-directed RNA polymerase subunit beta (1390 aa).

Belongs to the RNA polymerase beta chain family. The RNAP catalytic core consists of 2 alpha, 1 beta, 1 beta' and 1 omega subunit. When a sigma factor is associated with the core the holoenzyme is formed, which can initiate transcription.

It carries out the reaction RNA(n) + a ribonucleoside 5'-triphosphate = RNA(n+1) + diphosphate. Functionally, DNA-dependent RNA polymerase catalyzes the transcription of DNA into RNA using the four ribonucleoside triphosphates as substrates. In Methylobacillus flagellatus (strain ATCC 51484 / DSM 6875 / VKM B-1610 / KT), this protein is DNA-directed RNA polymerase subunit beta.